The primary structure comprises 1312 residues: Retinoblastoma-like protein A (1312 aa).

Disordered stretches follow at residues 1-67 (MMAH…NNEN), 168-231 (SSSS…KNSS), 336-359 (HNYNNNSNNNNNNNNNNNNNNNNN), 536-611 (NNNN…IYGT), 987-1023 (NNNNNNNNNNNNNNNNNNNNNNINNNNNNNENNNNNN), 1168-1236 (KKND…NNTE), and 1249-1312 (EESP…RLKS). Residues 10-67 (TNINTKTTAPTTTTTEQQPEQQQQQPEQQQQEKQNNNNNNNNNNNNNNNINNNENNEN) show a composition bias toward low complexity. Residues 36 to 117 (EQQQQEKQNN…TSSALNVDQD (82 aa)) adopt a coiled-coil conformation. Residues 168–179 (SSSSFQPDNNSK) are compositionally biased toward polar residues. Over residues 180–189 (IKGRKIRKTN) the composition is skewed to basic residues. Positions 195-230 (NNDSNEEEEETTTDTEEEEEEDTLLNENNNSINKNS) form a coiled coil. Acidic residues predominate over residues 198-218 (SNEEEEETTTDTEEEEEEDTL). 3 stretches are compositionally biased toward low complexity: residues 219 to 231 (LNENNNSINKNSS), 337 to 359 (NYNNNSNNNNNNNNNNNNNNNNN), and 536 to 595 (NNNN…SSSS). 3 stretches are compositionally biased toward low complexity: residues 1185 to 1234 (NNNN…NNNN), 1251 to 1275 (SPSTPSSSSSPTILNNNKKNNNNNK), and 1286 to 1305 (SPSSSPLSSSSSSSSSSSSG).

The protein belongs to the retinoblastoma protein (RB) family.

The protein resides in the nucleus. In terms of biological role, key regulator of entry into cell division. Directly involved in heterochromatin formation by maintaining overall chromatin structure and, in particular, that of constitutive heterochromatin by stabilizing histone methylation. Controls histone H4 'Lys-20' trimethylation. Probably acts as a transcription repressor by recruiting chromatin-modifying enzymes to promoters. Plays a dual role, regulating cell-cycle progression and transcriptional events leading to terminal differentiation. In the absence of a G1 phase, functions in late G2 controlling the expression of both S-phase and mitotic genes. Controls stalk/spore preference by suppressing the DIF response in cells destined for the spore pathway. DIF is a chlorinated hydroxyphenone made by cells of spore pathway that promotes stalk differentiation. This Dictyostelium discoideum (Social amoeba) protein is Retinoblastoma-like protein A.